Here is a 487-residue protein sequence, read N- to C-terminus: Chromosomal replication initiator protein DnaA (487 aa).

Positions 1–79 are domain I, interacts with DnaA modulators; sequence MEKSKNIWSL…GYNNIVIVFT (79 aa). The tract at residues 79–142 is domain II; the sequence is TNQPPKTHSN…EEEPTNFKNP (64 aa). The segment at 143–359 is domain III, AAA+ region; that stretch reads FLKKRYTFEN…AAVTKLKAYI (217 aa). Positions 187, 189, 190, and 191 each coordinate ATP. The tract at residues 360 to 487 is domain IV, binds dsDNA; sequence DLDNIEIDIE…TELMNKIKKN (128 aa).

The protein belongs to the DnaA family. In terms of assembly, oligomerizes as a right-handed, spiral filament on DNA at oriC.

The protein localises to the cytoplasm. Plays an essential role in the initiation and regulation of chromosomal replication. ATP-DnaA binds to the origin of replication (oriC) to initiate formation of the DNA replication initiation complex once per cell cycle. Binds the DnaA box (a 9 base pair repeat at the origin) and separates the double-stranded (ds)DNA. Forms a right-handed helical filament on oriC DNA; dsDNA binds to the exterior of the filament while single-stranded (ss)DNA is stabiized in the filament's interior. The ATP-DnaA-oriC complex binds and stabilizes one strand of the AT-rich DNA unwinding element (DUE), permitting loading of DNA polymerase. After initiation quickly degrades to an ADP-DnaA complex that is not apt for DNA replication. Binds acidic phospholipids. The chain is Chromosomal replication initiator protein DnaA from Borreliella burgdorferi (strain ZS7) (Borrelia burgdorferi).